Reading from the N-terminus, the 95-residue chain is Small ribosomal subunit protein bS18 (95 aa).

It belongs to the bacterial ribosomal protein bS18 family. As to quaternary structure, part of the 30S ribosomal subunit. Forms a tight heterodimer with protein bS6.

Its function is as follows. Binds as a heterodimer with protein bS6 to the central domain of the 16S rRNA, where it helps stabilize the platform of the 30S subunit. This is Small ribosomal subunit protein bS18 from Rickettsia felis (strain ATCC VR-1525 / URRWXCal2) (Rickettsia azadi).